Here is a 190-residue protein sequence, read N- to C-terminus: Protein LIGHT-DEPENDENT SHORT HYPOCOTYLS 1 (190 aa).

The segment covering 1–26 has biased composition (polar residues); sequence MDLISHQPNKNPNSSTQLTPPSSSRY. 2 disordered regions span residues 1 to 28 and 145 to 190; these read MDLI…RYEN and GVSY…GATV. Residues 25–152 form the ALOG domain; the sequence is RYENQKRRDW…ARGVSYEKKR (128 aa). Residues 150-154 carry the Nuclear localization signal motif; sequence KKRKR. A compositionally biased stretch (low complexity) spans 158 to 179; the sequence is QKPQTQPPLQLQQQQQQPQQGQ. The segment covering 180–190 has biased composition (polar residues); that stretch reads SMMANYSGATV.

Belongs to the plant homeotic and developmental regulators ALOG protein family. As to expression, expressed in hypocotyls, shoot apices and lateral root primordia and, weakly, in vascular tissues.

The protein resides in the nucleus. Functionally, probable transcription regulator that acts as a developmental regulator by promoting cell growth in response to continuous red (cR), far-red (cFR) and blue (cB) light in a phytochrome-dependent manner, at least during seedling development. The chain is Protein LIGHT-DEPENDENT SHORT HYPOCOTYLS 1 (LSH1) from Arabidopsis thaliana (Mouse-ear cress).